The sequence spans 88 residues: Small ribosomal subunit protein uS15 (88 aa).

This sequence belongs to the universal ribosomal protein uS15 family. As to quaternary structure, part of the 30S ribosomal subunit. Forms a bridge to the 50S subunit in the 70S ribosome, contacting the 23S rRNA.

Its function is as follows. One of the primary rRNA binding proteins, it binds directly to 16S rRNA where it helps nucleate assembly of the platform of the 30S subunit by binding and bridging several RNA helices of the 16S rRNA. Forms an intersubunit bridge (bridge B4) with the 23S rRNA of the 50S subunit in the ribosome. In Acidobacterium capsulatum (strain ATCC 51196 / DSM 11244 / BCRC 80197 / JCM 7670 / NBRC 15755 / NCIMB 13165 / 161), this protein is Small ribosomal subunit protein uS15.